The sequence spans 278 residues: Small ribosomal subunit protein uS2 (278 aa).

The tract at residues 233–257 is disordered; the sequence is IDMEAAGEAPANKGKKKSVKARLDK.

It belongs to the universal ribosomal protein uS2 family.

The polypeptide is Small ribosomal subunit protein uS2 (Bacteroides thetaiotaomicron (strain ATCC 29148 / DSM 2079 / JCM 5827 / CCUG 10774 / NCTC 10582 / VPI-5482 / E50)).